A 71-amino-acid chain; its full sequence is Phosphatidylinositol N-acetylglucosaminyltransferase subunit Y (71 aa).

Residues Met-1 to Leu-5 are Cytoplasmic-facing. Residues Pro-6–Val-26 form a helical membrane-spanning segment. Topologically, residues Glu-27–Ser-44 are lumenal. Residues Leu-45–Leu-65 form a helical membrane-spanning segment. At Lys-66–Asn-71 the chain is on the cytoplasmic side.

Component of the glycosylphosphatidylinositol-N-acetylglucosaminyltransferase (GPI-GnT) complex composed at least by PIGA, PIGC, PIGH, PIGP, PIGQ, PIGY and DPM2. Interacts directly with PIGA; this interaction regulates glycosylphosphatidylinositol-N-acetylglucosaminyltransferase activity. Does not interact with Ras proteins.

Its subcellular location is the endoplasmic reticulum membrane. The protein operates within glycolipid biosynthesis; glycosylphosphatidylinositol-anchor biosynthesis. Part of the glycosylphosphatidylinositol-N-acetylglucosaminyltransferase (GPI-GnT) complex that catalyzes the transfer of N-acetylglucosamine from UDP-N-acetylglucosamine to phosphatidylinositol and participates in the first step of GPI biosynthesis. May act by regulating the catalytic subunit PIGA. This chain is Phosphatidylinositol N-acetylglucosaminyltransferase subunit Y, found in Mus musculus (Mouse).